A 101-amino-acid polypeptide reads, in one-letter code: NADH-quinone oxidoreductase subunit K (101 aa).

The next 3 helical transmembrane spans lie at 4 to 24 (LSHY…GIFL), 30 to 50 (IVLL…FIAF), and 61 to 81 (VFVF…LAIL).

This sequence belongs to the complex I subunit 4L family. In terms of assembly, NDH-1 is composed of 14 different subunits. Subunits NuoA, H, J, K, L, M, N constitute the membrane sector of the complex.

It localises to the cell inner membrane. The enzyme catalyses a quinone + NADH + 5 H(+)(in) = a quinol + NAD(+) + 4 H(+)(out). Functionally, NDH-1 shuttles electrons from NADH, via FMN and iron-sulfur (Fe-S) centers, to quinones in the respiratory chain. The immediate electron acceptor for the enzyme in this species is believed to be ubiquinone. Couples the redox reaction to proton translocation (for every two electrons transferred, four hydrogen ions are translocated across the cytoplasmic membrane), and thus conserves the redox energy in a proton gradient. This Methylovorus glucosotrophus (strain SIP3-4) protein is NADH-quinone oxidoreductase subunit K.